The chain runs to 161 residues: S-protein homolog 2 (161 aa).

Positions 1 to 24 (MDIPKQYLSLFILIIFITTKLSQA) are cleaved as a signal peptide. 3 N-linked (GlcNAc...) asparagine glycosylation sites follow: asparagine 75, asparagine 106, and asparagine 157.

The protein belongs to the plant self-incompatibility (S1) protein family.

It localises to the secreted. This Arabidopsis thaliana (Mouse-ear cress) protein is S-protein homolog 2.